Consider the following 340-residue polypeptide: Fructose-1,6-bisphosphatase class 1 (340 aa).

Residues Glu-107, Asp-126, Leu-128, and Asp-129 each contribute to the Mg(2+) site. Residue Asn-215 coordinates substrate. Glu-287 contributes to the Mg(2+) binding site.

Belongs to the FBPase class 1 family. In terms of assembly, homotetramer. It depends on Mg(2+) as a cofactor.

Its subcellular location is the cytoplasm. The enzyme catalyses beta-D-fructose 1,6-bisphosphate + H2O = beta-D-fructose 6-phosphate + phosphate. It participates in carbohydrate biosynthesis; gluconeogenesis. This is Fructose-1,6-bisphosphatase class 1 from Brucella anthropi (strain ATCC 49188 / DSM 6882 / CCUG 24695 / JCM 21032 / LMG 3331 / NBRC 15819 / NCTC 12168 / Alc 37) (Ochrobactrum anthropi).